The chain runs to 138 residues: Large ribosomal subunit protein uL16 (138 aa).

Positions 1 to 13 (MLQPKRRKYRKEQ) are enriched in basic residues. The tract at residues 1–20 (MLQPKRRKYRKEQKGRNTGI) is disordered.

It belongs to the universal ribosomal protein uL16 family. In terms of assembly, part of the 50S ribosomal subunit.

Its function is as follows. Binds 23S rRNA and is also seen to make contacts with the A and possibly P site tRNAs. In Ralstonia nicotianae (strain ATCC BAA-1114 / GMI1000) (Ralstonia solanacearum), this protein is Large ribosomal subunit protein uL16.